The following is a 409-amino-acid chain: SPI-1 type 3 secretion system translocon protein SctB (409 aa).

A helical membrane pass occupies residues 119 to 140 (ISGMSSSAVALLAAANTLMLTL). Residues 350–368 (ERSEQQISQVNNRVASTAS) are compositionally biased toward polar residues. Residues 350 to 378 (ERSEQQISQVNNRVASTASDEARESSRKS) are disordered.

It belongs to the SctB/SipC family. The core secretion machinery of the T3SS is composed of approximately 20 different proteins, including cytoplasmic components, a base, an export apparatus and a needle. This subunit is involved in the formation of a pore, called the translocon, in host membrane.

Its subcellular location is the secreted. The protein resides in the host membrane. Its function is as follows. Component of the type III secretion system 1 (SPI-1 T3SS), also called injectisome, which is used to inject bacterial effector proteins into eukaryotic host cells. SipB/SctE1 and SipC/SctB1 are inserted into the host membrane where they form a pore and allow the translocation of effector proteins into the cytosol of target cells. The polypeptide is SPI-1 type 3 secretion system translocon protein SctB (Salmonella typhi).